The primary structure comprises 87 residues: UPF0235 protein TGRD_618 (87 aa).

It belongs to the UPF0235 family.

The protein is UPF0235 protein TGRD_618 of Endomicrobium trichonymphae.